The primary structure comprises 542 residues: Chaperonin GroEL 2 (542 aa).

Residues 30–33, lysine 51, 87–91, glycine 415, and aspartate 496 contribute to the ATP site; these read TLGP and DGTTT.

Belongs to the chaperonin (HSP60) family. As to quaternary structure, forms a cylinder of 14 subunits composed of two heptameric rings stacked back-to-back. Interacts with the co-chaperonin GroES.

It is found in the cytoplasm. It catalyses the reaction ATP + H2O + a folded polypeptide = ADP + phosphate + an unfolded polypeptide.. Functionally, together with its co-chaperonin GroES, plays an essential role in assisting protein folding. The GroEL-GroES system forms a nano-cage that allows encapsulation of the non-native substrate proteins and provides a physical environment optimized to promote and accelerate protein folding. This is Chaperonin GroEL 2 from Chelativorans sp. (strain BNC1).